The sequence spans 1222 residues: Chitin synthase 4 (1222 aa).

Residues 1-108 (MSLPERPGGI…NRIDKDHPNY (108 aa)) form a disordered region. A compositionally biased stretch (polar residues) spans 51-68 (LSANSFAETIPSPNNSFV). The N-linked (GlcNAc...) asparagine glycan is linked to Asn64. A compositionally biased stretch (basic and acidic residues) spans 94-107 (IRPERNRIDKDHPN). Asn116 carries N-linked (GlcNAc...) asparagine glycosylation. The disordered stretch occupies residues 136 to 199 (TTDVSGSRSQ…KSTKKRSTPQ (64 aa)). A compositionally biased stretch (polar residues) spans 137–154 (TDVSGSRSQTLDGVSDTS). Positions 176-196 (SAKRVSRHKSGKITKSTKKRS) are enriched in basic residues. The next 2 helical transmembrane spans lie at 204–224 (PPSF…DFML) and 242–262 (MGLI…TFGF). 2 N-linked (GlcNAc...) asparagine glycosylation sites follow: Asn378 and Asn418. A helical transmembrane segment spans residues 509–529 (YVFLALILSVVGSRFVLALIF). The segment at 595-662 (RFSTVYGPDR…PPSDGPGPAG (68 aa)) is disordered. Over residues 608-643 (NKRVPTTMASSGGSGSQLLHPNSMYRQGNDSRSSFL) the composition is skewed to polar residues. Residues Asn636 and Asn1031 are each glycosylated (N-linked (GlcNAc...) asparagine). Helical transmembrane passes span 1056 to 1076 (FIVF…AFTF), 1090 to 1110 (VIPL…IVIT), and 1116 to 1136 (YLVW…VLPV). Residues 1201 to 1222 (GGGNSWSMPPGHQYHDDYYSDA) are disordered. Over residues 1213-1222 (QYHDDYYSDA) the composition is skewed to basic and acidic residues.

This sequence belongs to the chitin synthase family. Class IV subfamily.

It is found in the cell membrane. The catalysed reaction is [(1-&gt;4)-N-acetyl-beta-D-glucosaminyl](n) + UDP-N-acetyl-alpha-D-glucosamine = [(1-&gt;4)-N-acetyl-beta-D-glucosaminyl](n+1) + UDP + H(+). Functionally, polymerizes chitin, a structural polymer of the cell wall and septum, by transferring the sugar moiety of UDP-GlcNAc to the non-reducing end of the growing chitin polymer. Plays a role in cell wall integrity and is involved in tolerance to hyperosmotic conditions. Required to successfully penetrate the host plants and thus plays a key role in pathogenicity. The protein is Chitin synthase 4 of Verticillium dahliae (strain VdLs.17 / ATCC MYA-4575 / FGSC 10137) (Verticillium wilt).